We begin with the raw amino-acid sequence, 392 residues long: NDP-glycosyltransferase YjiC (392 aa).

UDP contacts are provided by residues Asn18, Thr229, Ser255, Val278, His293, and 297–301; that span reads NSTME.

Belongs to the UDP-glycosyltransferase family. Monomer.

The catalysed reaction is an NDP-glycose + an acceptor = a glycosylated acceptor + NDP.. Activity is improved in the presence of Mn(2+), Mg(2+) and Ca(2+), and inhibited by Ni(2+), Zn(2+) and Cu(2+). Glycosyltransferase that can glycosylate a wide range of substrates, including various flavonoids, phenyl ketones, curcuminoid, lignins, zingerone, triterpenes, stilbene and anthraquinone, using UDP-glucose or ADP-glucose as sugar donor. It also exhibits O-, N- and S-glycosylation activities towards simple aromatics. In vivo, the broad acceptor tolerance of YjiC might function as a detoxification agent against exogenous xenobiotics to make the strain adaptable to the changeable environment. The polypeptide is NDP-glycosyltransferase YjiC (yjiC) (Bacillus subtilis (strain 168)).